The following is a 489-amino-acid chain: Putative ABC transporter ATP-binding protein TDE_0282 (489 aa).

2 consecutive ABC transporter domains span residues Ile2–Leu241 and Phe269–Glu487. ATP is bound by residues Gly36–Thr43 and Gly301–Thr308.

The protein belongs to the ABC transporter superfamily.

Its subcellular location is the cell inner membrane. Functionally, probably part of an ABC transporter complex. Responsible for energy coupling to the transport system. The protein is Putative ABC transporter ATP-binding protein TDE_0282 of Treponema denticola (strain ATCC 35405 / DSM 14222 / CIP 103919 / JCM 8153 / KCTC 15104).